Consider the following 511-residue polypeptide: ATP synthase subunit alpha, mitochondrial (511 aa).

171-178 (GDRQTGKT) provides a ligand contact to ATP.

This sequence belongs to the ATPase alpha/beta chains family. In terms of assembly, F-type ATPases have 2 components, CF(1) - the catalytic core - and CF(0) - the membrane proton channel. CF(1) has five subunits: alpha(3), beta(3), gamma(1), delta(1), epsilon(1). CF(0) has three main subunits: a, b and c.

It localises to the mitochondrion. The protein localises to the mitochondrion inner membrane. In terms of biological role, mitochondrial membrane ATP synthase (F(1)F(0) ATP synthase or Complex V) produces ATP from ADP in the presence of a proton gradient across the membrane which is generated by electron transport complexes of the respiratory chain. F-type ATPases consist of two structural domains, F(1) - containing the extramembraneous catalytic core, and F(0) - containing the membrane proton channel, linked together by a central stalk and a peripheral stalk. During catalysis, ATP synthesis in the catalytic domain of F(1) is coupled via a rotary mechanism of the central stalk subunits to proton translocation. Subunits alpha and beta form the catalytic core in F(1). Rotation of the central stalk against the surrounding alpha(3)beta(3) subunits leads to hydrolysis of ATP in three separate catalytic sites on the beta subunits. Subunit alpha does not bear the catalytic high-affinity ATP-binding sites. This Oenothera biennis (German evening primrose) protein is ATP synthase subunit alpha, mitochondrial (ATPA).